Consider the following 1235-residue polypeptide: Serine/threonine-protein kinase TAO2 (1235 aa).

Ser-9 carries the post-translational modification Phosphoserine. One can recognise a Protein kinase domain in the interval 28-281; the sequence is FSDLREIGHG…SEVLLKHRFV (254 aa). ATP contacts are provided by residues 34-42 and Lys-57; that span reads IGHGSFGAV. 106–108 contacts staurosporine; sequence EYC. Asp-151 acts as the Proton acceptor in catalysis. Gly-155 lines the staurosporine pocket. Ser-181 carries the phosphoserine modification. Positions 318–457 are disordered; sequence QEAPNGPGAE…PTSTSSSSAR (140 aa). Low complexity predominate over residues 350 to 374; sequence SSHSVPSMSISASSQSSSVNSLADA. The segment covering 375–395 has biased composition (acidic residues); the sequence is SDNEEEEEEEEEEEEEEEEEG. A compositionally biased stretch (basic and acidic residues) spans 396–411; that stretch reads PESREMAMMQEGEHTV. Phosphoserine is present on Ser-416. 2 coiled-coil regions span residues 488 to 523 and 576 to 603; these read SALREQLSGYKRMRRQHQKQLLALESRLRGEREEHS and KELAALLEAQKRTYKLRKEQLKEELQEN. Residue Ser-658 is modified to Phosphoserine. Residues 683-715 are a coiled coil; sequence LRQHEATRELELRQLQAVQRTRAELTRLQHQTE. Phosphoserine occurs at positions 777, 825, and 827. The segment at 892–941 is disordered; sequence GPVLTPVPEEEEEEEEEGGAPIGTPRDPGDGCPSPDIPPEPPPSHLRQYP. Over residues 899–909 the composition is skewed to acidic residues; the sequence is PEEEEEEEEEG. Over residues 926–935 the composition is skewed to pro residues; sequence PDIPPEPPPS. A run of 3 helical transmembrane segments spans residues 967-987, 989-1009, and 1014-1034; these read LLPLLLLLLLPLLAAQGGGGL, AALLALEVGLVGLGASYLFLC, and LPPSLFLLLAQGTALGAVLSL. Arg-1038 carries the phosphoserine modification. The next 2 membrane-spanning stretches (helical) occupy residues 1040–1060 and 1170–1190; these read LMGVPLGLGAAWLLAWPSLAL and LASCLPPWAVHILASWGLLKG. Residues 1210–1235 are disordered; sequence SASRQLPPGTVAGRRSQTRRALPPWR.

Belongs to the protein kinase superfamily. STE Ser/Thr protein kinase family. STE20 subfamily. As to quaternary structure, self-associates. Interacts with MAP2K3 and MAP2K6. Interacts with tubulins. Interacts with MAP3K7 and interferes with MAP3K7-binding to CHUK and thus prevents NF-kappa-B activation. Isoform 2 interacts with PCDH8; this complex may also include CDH2. The cofactor is Mg(2+). Autophosphorylated. Phosphorylated by ATM. Post-translationally, phosphorylated on Ser-1038 by MAPK14. This phosphorylation is required PCDH8 for endocytosis.

The protein resides in the cytoplasmic vesicle membrane. Its subcellular location is the cytoplasm. It localises to the cytoskeleton. The protein localises to the cell projection. It is found in the dendrite. The catalysed reaction is L-seryl-[protein] + ATP = O-phospho-L-seryl-[protein] + ADP + H(+). The enzyme catalyses L-threonyl-[protein] + ATP = O-phospho-L-threonyl-[protein] + ADP + H(+). Moderately inhibited by staurosporine, a broad-range protein kinase inhibitor. Functionally, serine/threonine-protein kinase involved in different processes such as membrane blebbing and apoptotic bodies formation DNA damage response and MAPK14/p38 MAPK stress-activated MAPK cascade. Phosphorylates itself, MBP, activated MAPK8, MAP2K3, MAP2K6 and tubulins. Activates the MAPK14/p38 MAPK signaling pathway through the specific activation and phosphorylation of the upstream MAP2K3 and MAP2K6 kinases. In response to DNA damage, involved in the G2/M transition DNA damage checkpoint by activating the p38/MAPK14 stress-activated MAPK cascade, probably by mediating phosphorylation of upstream MAP2K3 and MAP2K6 kinases. May affect microtubule organization and stability. May play a role in the osmotic stress-MAPK8 pathway. Prevents MAP3K7-mediated activation of CHUK, and thus NF-kappa-B activation. Isoform 2, but not isoform 1, is required for PCDH8 endocytosis. Following homophilic interactions between PCDH8 extracellular domains, isoform 2 phosphorylates and activates MAPK14/p38 MAPK which in turn phosphorylates isoform 2. This process leads to PCDH8 endocytosis and CDH2 cointernalization. Both isoforms are involved in MAPK14/p38 MAPK activation. In Rattus norvegicus (Rat), this protein is Serine/threonine-protein kinase TAO2 (Taok2).